The primary structure comprises 443 residues: Putative transporter AmpG 1 (443 aa).

The next 13 membrane-spanning stretches (helical) occupy residues 5–25 (SHIY…MITG), 42–62 (IGML…APVF), 78–98 (LSWI…LSFL), 104–124 (LVLL…QDTI), 143–163 (GIYI…AIYL), 171–191 (AIYK…ILVA), 230–250 (FNYF…GFYF), 254–274 (DINL…YRLP), 299–319 (VCKF…GIIM), 324–344 (ILYS…FFIL), 354–374 (ILFI…TAYI), 393–413 (LSSM…YMVV), and 415–435 (FGWQ…LLIL).

Belongs to the major facilitator superfamily.

The protein resides in the cell inner membrane. This chain is Putative transporter AmpG 1 (ampG1), found in Rickettsia prowazekii (strain Madrid E).